We begin with the raw amino-acid sequence, 378 residues long: 8-demethyl-8-alpha-L-rhamnosyl tetracenomycin-C 2'-O-methyltransferase (378 aa).

S-adenosyl-L-methionine is bound by residues Glu-195–Tyr-201, Ser-210, Asp-227, Asp-245–Gln-246, and Asp-268. Position 268 (Asp-268) interacts with Mg(2+). His-271 (proton acceptor) is an active-site residue. Residues Glu-296 and Asp-297 each contribute to the Mg(2+) site.

The protein belongs to the methyltransferase OleY/MycE family. Mg(2+) serves as cofactor.

It carries out the reaction 8-demethyl-8-alpha-L-rhamnosyl-tetracenomycin C + S-adenosyl-L-methionine = 8-demethyl-8-(2-O-methyl-alpha-L-rhamnosyl)-tetracenomycin C + S-adenosyl-L-homocysteine + H(+). The protein operates within antibiotic biosynthesis. O-methyltransferase involved in the biosynthesis of the permethylated L-rhamnose moiety of elloramycin, an antitumor polyketide. Mediates the methylation of the hydroxy groups at the 2'-position after the sugar moiety has been attached to the aglycon. This Streptomyces olivaceus protein is 8-demethyl-8-alpha-L-rhamnosyl tetracenomycin-C 2'-O-methyltransferase.